The following is a 177-amino-acid chain: MNNSPLLVVGLGNPGPKYVGTRHNIGFEVAEELVSRSFGSFSVHKRSNTDIAQLPGLIVAKPRSFMNLSGTPIRALCDFFKISPANVIVVHDELELDFGSVKLRQGGGDHGHNGLKSTSKSLGTKDYWKLSMGIGRPPGRMDPASFVLKPFGKQELADIPIMAADAADLVEKHLQQG.

Tyr18 contributes to the tRNA binding site. His23 serves as the catalytic Proton acceptor. Phe65, Asn67, and Asn113 together coordinate tRNA.

The protein belongs to the PTH family. Monomer.

It localises to the cytoplasm. The enzyme catalyses an N-acyl-L-alpha-aminoacyl-tRNA + H2O = an N-acyl-L-amino acid + a tRNA + H(+). Its function is as follows. Hydrolyzes ribosome-free peptidyl-tRNAs (with 1 or more amino acids incorporated), which drop off the ribosome during protein synthesis, or as a result of ribosome stalling. Catalyzes the release of premature peptidyl moieties from peptidyl-tRNA molecules trapped in stalled 50S ribosomal subunits, and thus maintains levels of free tRNAs and 50S ribosomes. This is Peptidyl-tRNA hydrolase 1 from Corynebacterium glutamicum (strain ATCC 13032 / DSM 20300 / JCM 1318 / BCRC 11384 / CCUG 27702 / LMG 3730 / NBRC 12168 / NCIMB 10025 / NRRL B-2784 / 534).